A 382-amino-acid chain; its full sequence is GDP-mannose transporter (382 aa).

Residues 1 to 40 (MADDKKTNEYTIEMDKLDHGNKDFEAPAPAVRPRGPPVAQ) are Cytoplasmic-facing. The chain crosses the membrane as a helical span at residues 41–61 (LANNPILPVLAYCGSSILMTV). Over 62 to 71 (MNKYVLSGRD) the chain is Lumenal. The helical transmembrane segment at 72–92 (FNLNFFLLCVQSIVCIVAIQT) threads the bilayer. Over 93–110 (CKVSKLITYRDFNSDEAK) the chain is Cytoplasmic. Residues 111-127 (KWFPITLLLIGMIYTGS) form a helical membrane-spanning segment. Over 128–134 (KALQYLS) the chain is Lumenal. The helical transmembrane segment at 135–151 (IPVYTIFKNLTIILIAY) threads the bilayer. At 152–160 (GEVLWFGGS) the chain is on the cytoplasmic side. A helical transmembrane segment spans residues 161–182 (VTGLTLFSFGLMVLSSIIAAWA). Residues 183–200 (DIKHAVESSGDATAKVST) are Lumenal-facing. The helical transmembrane segment at 201–221 (LNAGYIWMLINCLCTSSYVLG) threads the bilayer. Topologically, residues 222–233 (MRKRIKLTNFKD) are cytoplasmic. A helical membrane pass occupies residues 234–254 (FDTMFYNNLLSIPVLLVLTFL). Over 255–274 (MEDWSSANIARNFPSTDRNG) the chain is Lumenal. A helical membrane pass occupies residues 275–295 (ILFAMILSGLSSVFISYTSAW). Topologically, residues 296 to 303 (CVRVTSST) are cytoplasmic. Residues 304-324 (TYSMVGALNKLPIALSGLIFF) traverse the membrane as a helical segment. Over 325–327 (DAP) the chain is Lumenal. The chain crosses the membrane as a helical span at residues 328–348 (VTFPSVSAIVVGFISGIVYAV). Topologically, residues 349–382 (AKIKQSAKPKTGVLPMSNPPVSASSQSMRDSLRS) are cytoplasmic. The tract at residues 358 to 382 (KTGVLPMSNPPVSASSQSMRDSLRS) is disordered. Residues 367–382 (PPVSASSQSMRDSLRS) are compositionally biased toward polar residues.

Belongs to the TPT transporter family. SLC35D subfamily. In terms of assembly, homooligomer.

The protein localises to the golgi apparatus membrane. It localises to the cytoplasmic vesicle membrane. The protein resides in the endoplasmic reticulum membrane. In terms of biological role, involved in the import of GDP-mannose from the cytoplasm into the Golgi lumen. This chain is GDP-mannose transporter (gmt1), found in Aspergillus fumigatus (strain CBS 144.89 / FGSC A1163 / CEA10) (Neosartorya fumigata).